A 337-amino-acid chain; its full sequence is WAT1-related protein At1g11460 (337 aa).

The next 10 membrane-spanning stretches (helical) occupy residues 14-34, 46-66, 83-103, 107-127, 139-159, 188-208, 220-240, 254-274, 284-304, and 309-329; these read WPPIIVMVISQVAMGSVNALV, IIGAYRIAISSFILAPIAYIL, FISGLLGASLMQFFYLLGLSY, TVACALVSLMPAITFAFALIL, AGMIKVMGTIICISGALFLTF, WLLGCLYLTIGTVLISLWILF, FSSTCLMSIFAAFQCALLSLY, FVIGVIVYAGVIGQAMSTVSV, VFVSAIMPIALISASLFDFII, and LYLGSLIGSVGTITGLYVFLW. Positions 27–157 constitute an EamA 1 domain; sequence MGSVNALVKK…IICISGALFL (131 aa). Residues 220 to 328 form the EamA 2 domain; that stretch reads FSSTCLMSIF…GTITGLYVFL (109 aa).

It belongs to the drug/metabolite transporter (DMT) superfamily. Plant drug/metabolite exporter (P-DME) (TC 2.A.7.4) family.

The protein localises to the membrane. The chain is WAT1-related protein At1g11460 from Arabidopsis thaliana (Mouse-ear cress).